The following is a 423-amino-acid chain: Type II methyltransferase M.BamHI (423 aa).

A compositionally biased stretch (basic and acidic residues) spans 397–414 (DFRQDHEGNSKGDKKNEN). Residues 397–423 (DFRQDHEGNSKGDKKNENNDQISLSLE) are disordered.

This sequence belongs to the N(4)/N(6)-methyltransferase family.

The enzyme catalyses a 2'-deoxycytidine in DNA + S-adenosyl-L-methionine = an N(4)-methyl-2'-deoxycytidine in DNA + S-adenosyl-L-homocysteine + H(+). Its function is as follows. A beta subtype methylase, recognizes the double-stranded sequence 5'-GGATCC-3', methylates C-5 on both strands, and protects the DNA from cleavage by the BamHI endonuclease. The chain is Type II methyltransferase M.BamHI from Bacillus amyloliquefaciens (Bacillus velezensis).